We begin with the raw amino-acid sequence, 309 residues long: Transcription termination/antitermination protein NusG (309 aa).

Disordered stretches follow at residues Met1–Glu24 and Glu58–Gly91. The segment covering Thr65–Gly91 has biased composition (acidic residues).

Belongs to the NusG family.

Participates in transcription elongation, termination and antitermination. The chain is Transcription termination/antitermination protein NusG from Streptomyces galbus.